A 250-amino-acid polypeptide reads, in one-letter code: DNA repair protein RecO (250 aa).

This sequence belongs to the RecO family.

Functionally, involved in DNA repair and RecF pathway recombination. The chain is DNA repair protein RecO from Thermodesulfovibrio yellowstonii (strain ATCC 51303 / DSM 11347 / YP87).